A 1125-amino-acid polypeptide reads, in one-letter code: Tudor domain-containing protein 7 (1125 aa).

Residues 3–76 (EADLVSKMLR…SGEITCYAMA (74 aa)) form the HTH OST-type 1 domain. The interval 126–157 (PGFSSDFSVSKKPNPTLLRDKGNSLGVKSDAE) is disordered. The span at 127-138 (GFSSDFSVSKKP) shows a compositional bias: polar residues. One can recognise an HTH OST-type 2 domain in the interval 260-329 (KMDEVQNRIK…GQDLLLYPAK (70 aa)). Serine 346 bears the Phosphoserine mark. One can recognise an HTH OST-type 3 domain in the interval 364-433 (MPGDFKEKVA…PQKAILYAKL (70 aa)). 2 Tudor domains span residues 540-597 (TVHV…FCSL) and 730-787 (LPFC…FLQE). Residues 881 to 895 (SSGTSSPNSKSGSTP) are compositionally biased toward low complexity. The interval 881–904 (SSGTSSPNSKSGSTPVPGSTGDNF) is disordered. Position 886 is a phosphoserine (serine 886). Positions 888–1125 (NSKSGSTPVP…EYLVELSKVN (238 aa)) are interaction with CDK17. Residues 920 to 1125 (TSSLSVEELP…EYLVELSKVN (206 aa)) form an interaction with CABLES1 region.

It belongs to the TDRD7 family. In terms of assembly, found in a mRNP complex, at least composed of TDRD1, TDRD6, TDRD7 and DDX4. Found in a complex containing CABLES1, CDK16 and CDK17. Interacts with CABLES1, CDK17 and PIWIL1.

It is found in the cytoplasm. Component of specific cytoplasmic RNA granules involved in post-transcriptional regulation of specific genes: probably acts by binding to specific mRNAs and regulating their translation. Required for lens transparency during lens development, by regulating translation of genes such as CRYBB3 and HSPB1 in the developing lens. Also required during spermatogenesis. This is Tudor domain-containing protein 7 (TDRD7) from Canis lupus familiaris (Dog).